Reading from the N-terminus, the 1029-residue chain is Beta-galactosidase 2 (1029 aa).

2 residues coordinate substrate: N104 and D203. D203 contributes to the Na(+) binding site. Residues E418, H420, and E463 each contribute to the Mg(2+) site. Residues E463 and 539–542 contribute to the substrate site; that span reads EYAH. E463 (proton donor) is an active-site residue. E539 functions as the Nucleophile in the catalytic mechanism. A Mg(2+)-binding site is contributed by N599. Na(+) is bound by residues F603 and N606. Substrate contacts are provided by N606 and W1004.

It belongs to the glycosyl hydrolase 2 family. As to quaternary structure, homotetramer. Mg(2+) serves as cofactor. Requires Na(+) as cofactor.

The enzyme catalyses Hydrolysis of terminal non-reducing beta-D-galactose residues in beta-D-galactosides.. This chain is Beta-galactosidase 2, found in Enterobacter cloacae.